The chain runs to 415 residues: Ankyrin repeat domain-containing protein 10 (415 aa).

4 ANK repeats span residues 20-49 (SLRF…RAHL), 56-85 (YGWT…SLNV), 90-119 (YAQT…NINK), and 123-152 (EGET…HTDL). Over residues 303–325 (TGSNGVSNGQPLSSGQASVSANG) the composition is skewed to polar residues. The tract at residues 303–330 (TGSNGVSNGQPLSSGQASVSANGTEEPE) is disordered.

This chain is Ankyrin repeat domain-containing protein 10 (Ankrd10), found in Mus musculus (Mouse).